Consider the following 176-residue polypeptide: Small ribosomal subunit protein uS5 (176 aa).

Positions leucine 11–valine 74 constitute an S5 DRBM domain.

The protein belongs to the universal ribosomal protein uS5 family. Part of the 30S ribosomal subunit. Contacts proteins S4 and S8.

Functionally, with S4 and S12 plays an important role in translational accuracy. Located at the back of the 30S subunit body where it stabilizes the conformation of the head with respect to the body. The protein is Small ribosomal subunit protein uS5 of Rickettsia conorii (strain ATCC VR-613 / Malish 7).